We begin with the raw amino-acid sequence, 234 residues long: Carboxy-S-adenosyl-L-methionine synthase (234 aa).

Residues Tyr-35, 60–62 (GCS), 109–110 (DV), Asn-124, and Arg-191 contribute to the S-adenosyl-L-methionine site.

Belongs to the class I-like SAM-binding methyltransferase superfamily. Cx-SAM synthase family. Homodimer.

The enzyme catalyses prephenate + S-adenosyl-L-methionine = carboxy-S-adenosyl-L-methionine + 3-phenylpyruvate + H2O. Catalyzes the conversion of S-adenosyl-L-methionine (SAM) to carboxy-S-adenosyl-L-methionine (Cx-SAM). The polypeptide is Carboxy-S-adenosyl-L-methionine synthase (Campylobacter curvus (strain 525.92)).